A 740-amino-acid chain; its full sequence is ABC transporter G family member 1 (740 aa).

The ABC transporter domain occupies 82–334; it reads LDFRNLFPRR…FTEFGSPIPE (253 aa). Residue 127–134 participates in ATP binding; it reads GASGSGKS. Positions 434 to 644 constitute an ABC transmembrane type-2 domain; sequence IEIKTLSKRS…PYEAVLQNEF (211 aa). The next 6 helical transmembrane spans lie at 453 to 473, 488 to 508, 529 to 549, 563 to 585, 594 to 614, and 713 to 733; these read LFGI…TVFW, FFAF…PVFL, VLSH…AFAA, GLLF…VTFL, LGYT…GFFI, and LFIT…TLLL.

Belongs to the ABC transporter superfamily. ABCG family. Eye pigment precursor importer (TC 3.A.1.204) subfamily.

The protein localises to the membrane. The chain is ABC transporter G family member 1 (ABCG1) from Arabidopsis thaliana (Mouse-ear cress).